The following is a 271-amino-acid chain: uncharacterized protein (271 aa).

The next 3 membrane-spanning stretches (helical) occupy residues 30-50 (IWFPIVVGIIASAVGMFGMLL), 189-209 (ALAAVIEELLVNIATAIYFLI), and 218-238 (FLVTVGSSLTYLSNIPMIFAC).

It is found in the cell membrane. This is an uncharacterized protein from Aquifex aeolicus (strain VF5).